A 367-amino-acid polypeptide reads, in one-letter code: Alanine racemase (367 aa).

Lysine 40 functions as the Proton acceptor; specific for D-alanine in the catalytic mechanism. At lysine 40 the chain carries N6-(pyridoxal phosphate)lysine. A substrate-binding site is contributed by arginine 136. Catalysis depends on tyrosine 263, which acts as the Proton acceptor; specific for L-alanine. Residue methionine 310 participates in substrate binding.

This sequence belongs to the alanine racemase family. Pyridoxal 5'-phosphate is required as a cofactor.

It catalyses the reaction L-alanine = D-alanine. The protein operates within amino-acid biosynthesis; D-alanine biosynthesis; D-alanine from L-alanine: step 1/1. Its function is as follows. Catalyzes the interconversion of L-alanine and D-alanine. May also act on other amino acids. This chain is Alanine racemase (alr), found in Streptococcus thermophilus (strain ATCC BAA-250 / LMG 18311).